The primary structure comprises 1883 residues: Lysophospholipase NTE1 (1883 aa).

Over 1–75 (MSQVPVASPA…LLRVVLASLN (75 aa)) the chain is Cytoplasmic. Residues 76-96 (LIRILATFSTITVPSLVYAIL) form a helical membrane-spanning segment. Over 97-103 (HYSLTLQ) the chain is Lumenal. A helical transmembrane segment spans residues 104-124 (LNFPSLALLFLTSLISAFIWL). Over 125 to 1883 (RYRHLNKYER…AGISARRNSI (1759 aa)) the chain is Cytoplasmic. Disordered stretches follow at residues 284–327 (HLAP…FNPP), 355–410 (ERLG…LYHA), 618–693 (SQRS…MVGP), 716–764 (SAQP…RKGS), 921–1069 (EEDR…ATNS), and 1084–1108 (LHQQ…GKRS). Polar residues predominate over residues 311–327 (NNATAPTSPYSSAFNPP). Residues 372 to 383 (ARTASSGTASAT) are compositionally biased toward low complexity. Polar residues predominate over residues 650–668 (PSLTTSSKQSNQKPTSSRI). Residues 863 to 1158 (AGHG…RRPI) and 1166 to 1285 (RLLS…IARR) contribute to the a nucleoside 3',5'-cyclic phosphate site. The span at 936–948 (TDASSGSSRQNRP) shows a compositional bias: polar residues. Positions 964 to 974 (LLDERNLREAD) are enriched in basic and acidic residues. Composition is skewed to polar residues over residues 988–998 (ISSNGDGNSGS) and 1084–1100 (LHQQ…QSSQ). The region spanning 1544-1708 (LVLGGGGARG…VDNLPVTVML (165 aa)) is the PNPLA domain. The GXGXXG signature appears at 1548 to 1553 (GGGARG). The GXSXG motif lies at 1575-1579 (GTSIG). Ser1577 functions as the Nucleophile in the catalytic mechanism. Asp1695 acts as the Proton acceptor in catalysis. The DGA/G signature appears at 1695–1697 (DGG). Residues 1852 to 1883 (DESGVGGGVRKIRKKRRRTRRKAGISARRNSI) are disordered. Residues 1861–1874 (RKIRKKRRRTRRKA) are compositionally biased toward basic residues.

Belongs to the NTE family.

It localises to the endoplasmic reticulum membrane. It carries out the reaction a 1-acyl-sn-glycero-3-phosphocholine + H2O = sn-glycerol 3-phosphocholine + a fatty acid + H(+). With respect to regulation, inhibited by organophosphorus esters. Intracellular phospholipase B that catalyzes the double deacylation of phosphatidylcholine (PC) to glycerophosphocholine (GroPCho). Plays an important role in membrane lipid homeostasis. Responsible for the rapid PC turnover in response to inositol, elevated temperatures, or when choline is present in the growth medium. This Mycosarcoma maydis (Corn smut fungus) protein is Lysophospholipase NTE1 (NTE1).